The chain runs to 145 residues: 3-hydroxyacyl-[acyl-carrier-protein] dehydratase FabZ (145 aa).

His-47 is a catalytic residue.

This sequence belongs to the thioester dehydratase family. FabZ subfamily.

The protein localises to the cytoplasm. The enzyme catalyses a (3R)-hydroxyacyl-[ACP] = a (2E)-enoyl-[ACP] + H2O. In terms of biological role, involved in unsaturated fatty acids biosynthesis. Catalyzes the dehydration of short chain beta-hydroxyacyl-ACPs and long chain saturated and unsaturated beta-hydroxyacyl-ACPs. In Ruthia magnifica subsp. Calyptogena magnifica, this protein is 3-hydroxyacyl-[acyl-carrier-protein] dehydratase FabZ.